The following is a 65-amino-acid chain: Small, acid-soluble spore protein Tlp (65 aa).

This sequence belongs to the Tlp family.

It is found in the spore core. The polypeptide is Small, acid-soluble spore protein Tlp (Bacillus anthracis (strain A0248)).